We begin with the raw amino-acid sequence, 3214 residues long: Ciliogenesis and planar polarity effector 1 (3214 aa).

Transmembrane regions (helical) follow at residues 593–613 and 632–652; these read KLML…LQFI and AWVL…YWDM. 11 disordered regions span residues 1496–1523, 1644–1667, 1879–1991, 2047–2142, 2214–2241, 2398–2440, 2491–2529, 2622–2650, 2824–2855, 3037–3127, and 3158–3181; these read VGKK…ETPG, GNQS…PLQS, DGRH…HRAQ, FGES…FPPA, SLSD…SSHC, GITQ…ISND, GSHD…GHEP, TFQS…QSGE, VSLQ…HSSQ, TAPA…CRED, and MSPA…VSES. A compositionally biased stretch (basic and acidic residues) spans 1512-1523; sequence NSQRKEDDETPG. Over residues 1932-1942 the composition is skewed to basic and acidic residues; sequence QCSRKEPRDAS. 3 stretches are compositionally biased toward polar residues: residues 1943–1953, 1971–1984, and 2047–2068; these read VDTNLTEQKGA, NGAQ…QKTQ, and FGES…SRQR. Positions 2079–2099 are enriched in basic and acidic residues; the sequence is CTREPGKNSPADHKRISRPDQ. The segment covering 2215-2241 has biased composition (polar residues); sequence LSDSCQPPVSQRTVHTTLPSPSDSSHC. Over residues 2500–2514 the composition is skewed to basic and acidic residues; it reads DPDKEGPSQKADSES. 2 stretches are compositionally biased toward polar residues: residues 2515–2524 and 2622–2634; these read SKNPQATAAS and TFQS…STRG. Acidic residues predominate over residues 2830–2848; sequence EDVEEQKDAEETSETEFSE. Over residues 3090 to 3107 the composition is skewed to polar residues; sequence RGSSQLRGSQPPCQSQKP.

Interacts with FUZ; INTU and WDPCP; the interactors are proposed to form the core CPLANE (ciliogenesis and planar polarity effectors) complex.

The protein localises to the membrane. Its subcellular location is the cell projection. The protein resides in the cilium. Functionally, involved in ciliogenesis. Involved in the establishment of cell polarity required for directional cell migration. Proposed to act in association with the CPLANE (ciliogenesis and planar polarity effectors) complex. Involved in recruitment of peripheral IFT-A proteins to basal bodies. The protein is Ciliogenesis and planar polarity effector 1 of Mus musculus (Mouse).